The sequence spans 155 residues: MRCPFCGNIDTQVKDSRPAEDHVSIRRRRFCPACGGRFTTYERVQLRDLVVIKSSGKREDFDRTKLERSIRIAMQKRPIEPERIDQMISGIVRRLESLGDTDIPSKVIGEIVMESLARIDTVAYVRFASVYKNFQAADDFDKFVSELRPSAPAEE.

The segment at 3–34 is a zinc-finger region; it reads CPFCGNIDTQVKDSRPAEDHVSIRRRRFCPAC. The ATP-cone domain occupies 49–139; the sequence is LVVIKSSGKR…VYKNFQAADD (91 aa).

It belongs to the NrdR family. Zn(2+) serves as cofactor.

Its function is as follows. Negatively regulates transcription of bacterial ribonucleotide reductase nrd genes and operons by binding to NrdR-boxes. The sequence is that of Transcriptional repressor NrdR from Cereibacter sphaeroides (strain ATCC 17029 / ATH 2.4.9) (Rhodobacter sphaeroides).